A 78-amino-acid chain; its full sequence is Probable [Fe-S]-dependent transcriptional repressor (78 aa).

Cys-56, Cys-61, Cys-64, and Cys-70 together coordinate iron-sulfur cluster.

Belongs to the FeoC family.

Functionally, may function as a transcriptional regulator that controls feoABC expression. In Citrobacter koseri (strain ATCC BAA-895 / CDC 4225-83 / SGSC4696), this protein is Probable [Fe-S]-dependent transcriptional repressor.